Consider the following 214-residue polypeptide: 3-demethoxyubiquinol 3-hydroxylase (214 aa).

Positions 63, 93, 96, 145, 177, and 180 each coordinate Fe cation.

It belongs to the COQ7 family. It depends on Fe cation as a cofactor.

The protein localises to the cell membrane. The catalysed reaction is a 5-methoxy-2-methyl-3-(all-trans-polyprenyl)benzene-1,4-diol + AH2 + O2 = a 3-demethylubiquinol + A + H2O. It functions in the pathway cofactor biosynthesis; ubiquinone biosynthesis. Catalyzes the hydroxylation of 2-nonaprenyl-3-methyl-6-methoxy-1,4-benzoquinol during ubiquinone biosynthesis. The sequence is that of 3-demethoxyubiquinol 3-hydroxylase from Psychrobacter arcticus (strain DSM 17307 / VKM B-2377 / 273-4).